Here is a 470-residue protein sequence, read N- to C-terminus: Putative F-box/LRR-repeat protein At3g58920 (470 aa).

The F-box domain occupies 1 to 53 (MDRISNLPNEIICHIVSFLSAKEAAFASVLSKRWQNLFTIVQKLEFDDSVKNQ). LRR repeat units follow at residues 114–142 (KLEIYGEDGYLLPSEVFTCKTIVDLKLTS), 143–170 (CIFAESYVIDVIPENAFLPGLESLFLKS), 173–198 (FSDLRGCAFQTLLSACPVLKTLTIYD), 225–250 (FTYFNGSDFKSITFDTPSLTYLKYID), 287–312 (EDDPITSNPTNLIKGLRNVEILHLST), and 342–367 (YECFNWRLLPILLKKTPNLKTLMIKG).

The sequence is that of Putative F-box/LRR-repeat protein At3g58920 from Arabidopsis thaliana (Mouse-ear cress).